The sequence spans 250 residues: NAD(P)H-quinone oxidoreductase subunit K, chloroplastic (250 aa).

[4Fe-4S] cluster is bound by residues cysteine 67, cysteine 68, cysteine 132, and cysteine 163.

It belongs to the complex I 20 kDa subunit family. NDH is composed of at least 16 different subunits, 5 of which are encoded in the nucleus. [4Fe-4S] cluster serves as cofactor.

Its subcellular location is the plastid. It localises to the chloroplast thylakoid membrane. It catalyses the reaction a plastoquinone + NADH + (n+1) H(+)(in) = a plastoquinol + NAD(+) + n H(+)(out). The catalysed reaction is a plastoquinone + NADPH + (n+1) H(+)(in) = a plastoquinol + NADP(+) + n H(+)(out). In terms of biological role, NDH shuttles electrons from NAD(P)H:plastoquinone, via FMN and iron-sulfur (Fe-S) centers, to quinones in the photosynthetic chain and possibly in a chloroplast respiratory chain. The immediate electron acceptor for the enzyme in this species is believed to be plastoquinone. Couples the redox reaction to proton translocation, and thus conserves the redox energy in a proton gradient. This chain is NAD(P)H-quinone oxidoreductase subunit K, chloroplastic, found in Adiantum capillus-veneris (Maidenhair fern).